A 503-amino-acid polypeptide reads, in one-letter code: Probable cytosol aminopeptidase (503 aa).

2 residues coordinate Mn(2+): Lys-268 and Asp-273. Lys-280 is an active-site residue. Asp-291, Asp-350, and Glu-352 together coordinate Mn(2+). Arg-354 is an active-site residue.

Belongs to the peptidase M17 family. Mn(2+) serves as cofactor.

The protein localises to the cytoplasm. It carries out the reaction Release of an N-terminal amino acid, Xaa-|-Yaa-, in which Xaa is preferably Leu, but may be other amino acids including Pro although not Arg or Lys, and Yaa may be Pro. Amino acid amides and methyl esters are also readily hydrolyzed, but rates on arylamides are exceedingly low.. It catalyses the reaction Release of an N-terminal amino acid, preferentially leucine, but not glutamic or aspartic acids.. In terms of biological role, presumably involved in the processing and regular turnover of intracellular proteins. Catalyzes the removal of unsubstituted N-terminal amino acids from various peptides. The sequence is that of Probable cytosol aminopeptidase from Corynebacterium efficiens (strain DSM 44549 / YS-314 / AJ 12310 / JCM 11189 / NBRC 100395).